The primary structure comprises 161 residues: MELYECIQDIFGGLKNPSVKDLATSLKQIPNAAKLSQPYIKEPDQYAYGRNAIYRNNELEIIVINIPPNKETTVHDHGQSIGCAMVLEGKLLNSIYRSTGEHAELSNSYFVHEGECLISTKGLIHKMSNPTSERMVSLHVYSPPLEDMTVFEEQKEVLENS.

Fe cation-binding residues include His-75, His-77, and His-125.

This sequence belongs to the cysteine dioxygenase family. Requires Fe cation as cofactor.

It carries out the reaction L-cysteine + O2 = 3-sulfino-L-alanine + H(+). The chain is Cysteine dioxygenase (cdoA) from Bacillus subtilis (strain 168).